The chain runs to 291 residues: Methionine aminopeptidase (291 aa).

Residue histidine 118 coordinates substrate. Positions 135, 146, and 209 each coordinate a divalent metal cation. Residue histidine 216 coordinates substrate. 2 residues coordinate a divalent metal cation: glutamate 241 and glutamate 273.

Belongs to the peptidase M24A family. Methionine aminopeptidase type 1 subfamily. In terms of assembly, monomer. Requires Co(2+) as cofactor. The cofactor is Zn(2+). Mn(2+) is required as a cofactor. It depends on Fe(2+) as a cofactor.

The enzyme catalyses Release of N-terminal amino acids, preferentially methionine, from peptides and arylamides.. Removes the N-terminal methionine from nascent proteins. The N-terminal methionine is often cleaved when the second residue in the primary sequence is small and uncharged (Met-Ala-, Cys, Gly, Pro, Ser, Thr, or Val). Requires deformylation of the N(alpha)-formylated initiator methionine before it can be hydrolyzed. This Chlamydia muridarum (strain MoPn / Nigg) protein is Methionine aminopeptidase.